Here is a 128-residue protein sequence, read N- to C-terminus: uncharacterized protein (128 aa).

This is an uncharacterized protein from Methanocaldococcus jannaschii (strain ATCC 43067 / DSM 2661 / JAL-1 / JCM 10045 / NBRC 100440) (Methanococcus jannaschii).